A 30-amino-acid chain; its full sequence is Beta/omega-theraphotoxin-Tp2a (30 aa).

Intrachain disulfides connect Cys2-Cys16, Cys9-Cys21, and Cys15-Cys25. Positions 26–30 (KKKLW) are flexible tail region important for ability to inhibit Nav channel. A hydrophobic dyad that anchors the toxin into the membrane while positioning it over the S3 helix of Nav1.7/SCN9A region spans residues 29-30 (LW).

Belongs to the neurotoxin 30 (phrixotoxin) family. In terms of tissue distribution, expressed by the venom gland.

The protein resides in the secreted. Gating-modifier toxin that targets voltage-gated sodium channels with a selective activity on Nav1.7/SCN9A (IC(50)=1-1.5 nM). It inhibits both activation and inactivation. For inhibition of activation, it is 100-fold more selective for Nav1.7/SCN9A (IC(50)=0.26-3) than for other sodium channels (Nav1.2/SCN2A (IC(50)=40-540 nM), Nav1.3/SCN3A (IC(50)=102 nM), Nav1.4/SCN4A (IC(50)=30-39 nM), Nav1.5/SCN5A (IC(50)=19-90 nM), Nav1.6/SCN8A (IC(50)=26 nM), and Nav1.8/SCN10A (IC(50)=146 nM)). For inhibition of inactivation, it is 20-fold more potent in inhibiting inactivation on Nav1.7/SCN9A (IC(50)=250 nM) than other channels (about 4.6 uM for all channels). It also weakly inhibits Cav1.2/CACNA1C and Cav3.2/CACNA1H (29% block at 1 uM). It inhibits Nav1.7/SCN9A activation by interacting with DII and impairs Nav1.7/SCN9A inactivation by interacting with DIV. It docks on top of the DII S3 helix Nav1.7/SCN9A. It is about 60-fold less active on Nav1.7/SCN9A at depolarized potential (0 mV; IC(50)=15 nM), compared to -120 mV potential (IC(50)=0.26 nM). This toxin binds to lipid membrane. This ability correlates with hNav1.7/SCN9A inhibition, showing that membrane binding is the first step in the inhibitory mechanism of this toxin. It inhibits Nav1.2/SCN2A less potently when it is coexpressed with SCN2B or SCN4B than when it is expressed alone, showing that beta subunits (SCN2B and SCN4B) have a protective effect. The sequence is that of Beta/omega-theraphotoxin-Tp2a from Thrixopelma pruriens (Peruvian green velvet tarantula).